The sequence spans 441 residues: Endothelin receptor type B (441 aa).

An N-terminal signal peptide occupies residues 1–26; that stretch reads MQPPPSLCGLALLALVLACGMAEVWG. Residues 27 to 100 are Extracellular-facing; it reads EEREMPSAPA…RPTEIKDTFK (74 aa). The disordered stretch occupies residues 30-90; the sequence is EMPSAPATPP…APRRTPPPCQ (61 aa). The span at 47 to 65 shows a compositional bias: polar residues; it reads LTPSTKTSWPRDSNASLPR. The N-linked (GlcNAc...) asparagine glycan is linked to Asn60. A helical transmembrane segment spans residues 101–125; that stretch reads YINTVVSCLVFVLGIIGNSTLLRII. The Cytoplasmic segment spans residues 126–136; that stretch reads YKNKCMRNGPN. Residues 137–162 traverse the membrane as a helical segment; it reads ILIASLALGDLLHIIIDIPINVYKLL. Over 163–174 the chain is Extracellular; it reads AEDWPFGAEMCK. A disulfide bond links Cys173 and Cys254. The helical transmembrane segment at 175 to 196 threads the bilayer; it reads LVPFIQKASVGITVLSLCALSI. Topologically, residues 197-217 are cytoplasmic; sequence DRYRAVASWSRIKGIGVPKWT. A helical membrane pass occupies residues 218–242; sequence AVEIVLIWVVSVILAVPEAIGFNLV. Topologically, residues 243-270 are extracellular; it reads TIDYKGSYLRICLLNPTQKTAFMQFYKT. Residues 271 to 295 form a helical membrane-spanning segment; the sequence is AKDWWLFSFYFCLPLAITAFFYTLM. At 296-323 the chain is on the cytoplasmic side; it reads TCEMLRKKSGMQIALNDHLKQRREVAKT. Ser304 carries the post-translational modification Phosphoserine. Residues 324-349 traverse the membrane as a helical segment; sequence VFCLVLVFGLCWLALHLSRILKLTLY. The Extracellular segment spans residues 350–361; sequence DQNDPNRCELLS. A helical membrane pass occupies residues 362–388; it reads FLLVLDYIGINMASLNSCINPIALYLV. At 389–441 the chain is on the cytoplasmic side; the sequence is SKRFKNCFKSCLCCWCQSFEEKQSLEEKQSCLKFKANDHGYDNFRSSNKYSSS. Residues Cys402 and Cys404 are each lipidated (S-palmitoyl cysteine). Ser418 is modified (phosphoserine). Tyr438 carries the phosphotyrosine modification. 3 positions are modified to phosphoserine: Ser439, Ser440, and Ser441.

This sequence belongs to the G-protein coupled receptor 1 family. Endothelin receptor subfamily. EDNRB sub-subfamily.

It is found in the cell membrane. Functionally, non-specific receptor for endothelin 1, 2, and 3. Mediates its action by association with G proteins that activate a phosphatidylinositol-calcium second messenger system. This chain is Endothelin receptor type B (EDNRB), found in Oryctolagus cuniculus (Rabbit).